Reading from the N-terminus, the 259-residue chain is Global transcriptional regulator CodY (259 aa).

The tract at residues 1–155 (MELLAKTRKL…SSTVVGMEIL (155 aa)) is GAF domain. The H-T-H motif DNA-binding region spans 203–222 (ASKIADRVGITRSVIVNALR). S215 is subject to Phosphoserine.

The protein belongs to the CodY family.

The protein localises to the cytoplasm. Functionally, DNA-binding global transcriptional regulator which is involved in the adaptive response to starvation and acts by directly or indirectly controlling the expression of numerous genes in response to nutrient availability. During rapid exponential growth, CodY is highly active and represses genes whose products allow adaptation to nutrient depletion. The polypeptide is Global transcriptional regulator CodY (Bacillus cereus (strain ATCC 10987 / NRS 248)).